The primary structure comprises 633 residues: Sodium- and chloride-dependent glycine transporter 1 (633 aa).

Residues 1 to 30 (MGLCVNGAVPSEATKKDENLKRGNWGNQIE) are Cytoplasmic-facing. The next 3 membrane-spanning stretches (helical) occupy residues 31 to 51 (FVLT…FPYL), 58 to 78 (GAFM…LFFM), and 113 to 133 (YIGI…FASM). The Extracellular portion of the chain corresponds to 134 to 208 (NRVLPWTYCN…ISEDIGDFGE (75 aa)). Residues asparagine 158, asparagine 164, asparagine 173, and asparagine 179 are each glycosylated (N-linked (GlcNAc...) asparagine). A run of 9 helical transmembrane segments spans residues 209–229 (VQLP…LCLI), 238–258 (VVYF…IRGI), 283–303 (VWGD…GGLI), 330–350 (SVYA…HLGV), 373–393 (LLPI…LLGL), 429–449 (IIGF…WLLL), 453–473 (YAAS…VMYI), 493–513 (LFFQ…ILIF), and 533–553 (ITIG…YAIF). Over 554–633 (KIWCSEGDTF…GQAHTQDSKV (80 aa)) the chain is Cytoplasmic. A disordered region spans residues 588 to 633 (RYAQMSSTRSESNPEAQPLNPEKMKEDLSLTIQGSNGQAHTQDSKV). Polar residues-rich tracts occupy residues 591–602 (QMSSTRSESNPE) and 617–633 (LTIQ…DSKV).

The protein belongs to the sodium:neurotransmitter symporter (SNF) (TC 2.A.22) family. SLC6A9 subfamily. As to expression, first expressed in early tailbud stage embryos in the midbrain and anterior spinal cord, and weakly in the hindbrain. By late tailbud stages, expression extends posteriorly in the spinal cord to appear in between somites. Expressed in the forebrain, retina, between the somites and in the blood islands by the swimming tadpole stages.

It is found in the cell membrane. The catalysed reaction is glycine(out) + chloride(out) + 2 Na(+)(out) = glycine(in) + chloride(in) + 2 Na(+)(in). Functionally, sodium- and chloride-dependent glycine transporter which is essential for regulating glycine concentrations at inhibitory glycinergic synapses. The chain is Sodium- and chloride-dependent glycine transporter 1 from Xenopus laevis (African clawed frog).